The sequence spans 137 residues: Basic phospholipase A2 homolog Cax-K49 (137 aa).

Residues 1–16 form the signal peptide; that stretch reads MRTFWIVAMLLVGVEG. Disulfide bonds link C42-C131, C44-C60, C59-C111, C65-C137, C66-C104, C73-C97, and C91-C102. Residues 121–133 form an important for membrane-damaging activities in eukaryotes and bacteria; heparin-binding region; it reads KKYKIYPKFLCKK.

In terms of assembly, homodimer; non-covalently linked. In terms of tissue distribution, expressed by the venom gland.

It localises to the secreted. Functionally, snake venom phospholipase A2 homolog that lacks enzymatic activity. Displays edema-inducing activities and may be myotoxic. A model of myotoxic mechanism has been proposed: an apo Lys49-PLA2 is activated by the entrance of a hydrophobic molecule (e.g. fatty acid) at the hydrophobic channel of the protein leading to a reorientation of a monomer. This reorientation causes a transition between 'inactive' to 'active' states, causing alignment of C-terminal and membrane-docking sites (MDoS) side-by-side and putting the membrane-disruption sites (MDiS) in the same plane, exposed to solvent and in a symmetric position for both monomers. The MDoS region stabilizes the toxin on membrane by the interaction of charged residues with phospholipid head groups. Subsequently, the MDiS region destabilizes the membrane with penetration of hydrophobic residues. This insertion causes a disorganization of the membrane, allowing an uncontrolled influx of ions (i.e. calcium and sodium), and eventually triggering irreversible intracellular alterations and cell death. The polypeptide is Basic phospholipase A2 homolog Cax-K49 (Crotalus atrox (Western diamondback rattlesnake)).